Here is a 197-residue protein sequence, read N- to C-terminus: Protein tyrosine phosphatase receptor type C-associated protein (197 aa).

A helical membrane pass occupies residues 33 to 53 (VVTIVLLLLLLLLLVTALALA). Phosphoserine is present on residues Ser99 and Ser103. Disordered regions lie at residues 120 to 164 (GPEE…GSSA) and 177 to 197 (SAAW…VTAL). The span at 124 to 145 (AAAKEEEQRCQAEQTRDPRDTD) shows a compositional bias: basic and acidic residues.

In terms of assembly, interacts with CD45/PTPRC. Phosphorylated on tyrosine residues. As to expression, leukocyte-specific. Expressed in B- and T-cell lines, in spleen, thymus, and bone marrow of adult mice, and in embryos.

The protein resides in the membrane. The chain is Protein tyrosine phosphatase receptor type C-associated protein (Ptprcap) from Mus musculus (Mouse).